Reading from the N-terminus, the 159-residue chain is MKLLSKIMIIALATSMLQACNGPGGMNKQGTGTLLGGAGGALLGSQFGKGKGQLVGVGVGALLGAVLGGQIGAGMDEQDRRLAELTSQRALETAPSGSNVEWRNPDNGNYGYVTPNKTYRNSTGQYCREYTQTVVIGGKQQKAYGNACRQPDGQWQVVN.

The N-terminal stretch at 1-19 (MKLLSKIMIIALATSMLQA) is a signal peptide. Cys20 is lipidated: N-palmitoyl cysteine. Residue Cys20 is the site of S-diacylglycerol cysteine attachment.

It belongs to the rickettsiale 17 kDa surface antigen family.

The protein resides in the cell outer membrane. This chain is 17 kDa surface antigen (omp), found in Rickettsia conorii (strain ATCC VR-613 / Malish 7).